The sequence spans 671 residues: UvrABC system protein B (671 aa).

Residues 26–414 (EGLENGLAHQ…GGDIIEQVVR (389 aa)) form the Helicase ATP-binding domain. Position 39 to 46 (39 to 46 (GVTGSGKT)) interacts with ATP. Residues 92 to 115 (YYDYYQPEAYVPSSDTFIEKDASV) carry the Beta-hairpin motif. A Helicase C-terminal domain is found at 431-593 (QVDDLLSEIR…IIPQGLNKKI (163 aa)). The UVR domain occupies 631-666 (DQKIRELEAKMYTYAQNLEFEQAAELRDQVHQLRQQ).

This sequence belongs to the UvrB family. As to quaternary structure, forms a heterotetramer with UvrA during the search for lesions. Interacts with UvrC in an incision complex.

The protein localises to the cytoplasm. The UvrABC repair system catalyzes the recognition and processing of DNA lesions. A damage recognition complex composed of 2 UvrA and 2 UvrB subunits scans DNA for abnormalities. Upon binding of the UvrA(2)B(2) complex to a putative damaged site, the DNA wraps around one UvrB monomer. DNA wrap is dependent on ATP binding by UvrB and probably causes local melting of the DNA helix, facilitating insertion of UvrB beta-hairpin between the DNA strands. Then UvrB probes one DNA strand for the presence of a lesion. If a lesion is found the UvrA subunits dissociate and the UvrB-DNA preincision complex is formed. This complex is subsequently bound by UvrC and the second UvrB is released. If no lesion is found, the DNA wraps around the other UvrB subunit that will check the other stand for damage. The protein is UvrABC system protein B of Yersinia pestis.